Consider the following 579-residue polypeptide: Suppressor of cytokine signaling 7 (579 aa).

Disordered stretches follow at residues 1–25 (MVFRNVGRPPEEEDAEAAREPGPSE), 89–270 (PPPP…RTQS), and 295–315 (QRGLTSPHPPTPPPPPRRSLS). 3 stretches are compositionally biased toward pro residues: residues 89 to 99 (PPPPQPPPPAA), 155 to 165 (PPGPELPPVPF), and 185 to 196 (QPPPPPPPPGPL). The interval 124–492 (AESLETNSCS…GKFLYFLRSR (369 aa)) is mediates interaction with SORBS3. Residues 206-217 (GSFKIRLSRLFR) are compositionally biased toward basic residues. Residues 301-311 (PHPPTPPPPPR) show a composition bias toward pro residues. In terms of domain architecture, SH2 spans 398–507 (WYWGPMNWED…PTPVQLLYPV (110 aa)). Positions 502-552 (QLLYPVSRFSNVKSLQHLCRFRIRQLVRIDHIPDLPLPKPLISYIRKFYYY) constitute an SOCS box domain.

Substrate-recognition component of the ECS(SOCS7) complex, composed of SOCS7, CUL5, ELOB, ELOC and RNF7/RBX2. Interacts, via the third proline-rich region, with the second SH3 domain of the adapter protein NCK1. Also interacts with GRB2, INSR, PLCG1, SORBS3/vinexin, and phosphorylated STAT3 and STAT5. Interacts with SEPT6. Interacts with phosphorylated IRS4 and PIK3R1. As to expression, widely expressed with higher expression in brain and testis where it is expressed by spermatocytes and early spermatids. Also significantly expressed in spleen, skeletal muscle and kidney.

It is found in the cytoplasm. The protein localises to the nucleus. The protein resides in the cell membrane. It participates in protein modification; protein ubiquitination. Substrate-recognition component of a cullin-5-RING E3 ubiquitin-protein ligase complex (ECS complex, also named CRL5 complex), which mediates the ubiquitination and subsequent proteasomal degradation of target proteins, such as DAB1 and IRS1. Specifically recognizes and binds phosphorylated proteins via its SH2 domain, promoting their ubiquitination. The ECS(SOCS7) complex acts as a key regulator of reelin signaling by mediating ubiquitination and degradation of phosphorylated DAB1 in the cortical plate of the developing cerebral cortex, thereby regulating neuron positioning during cortex development. Functions in insulin signaling and glucose homeostasis through IRS1 ubiquitination and subsequent proteasomal degradation. Also inhibits prolactin, growth hormone and leptin signaling by preventing STAT3 and STAT5 activation, sequestering them in the cytoplasm and reducing their binding to DNA. In Mus musculus (Mouse), this protein is Suppressor of cytokine signaling 7.